The sequence spans 398 residues: Elongation factor Tu (398 aa).

The tr-type G domain maps to 10 to 207 (KPHVNIGTIG…TVDEYIPEPE (198 aa)). Positions 19–26 (GHVDHGKT) are G1. 19–26 (GHVDHGKT) contributes to the GTP binding site. Residue threonine 26 participates in Mg(2+) binding. Residues 63–67 (GITIN) form a G2 region. The G3 stretch occupies residues 84-87 (DAPG). GTP is bound by residues 84–88 (DAPGH) and 139–142 (NKVD). Positions 139-142 (NKVD) are G4. The tract at residues 177–179 (SAL) is G5.

This sequence belongs to the TRAFAC class translation factor GTPase superfamily. Classic translation factor GTPase family. EF-Tu/EF-1A subfamily. As to quaternary structure, monomer.

It is found in the cytoplasm. It carries out the reaction GTP + H2O = GDP + phosphate + H(+). Its function is as follows. GTP hydrolase that promotes the GTP-dependent binding of aminoacyl-tRNA to the A-site of ribosomes during protein biosynthesis. The protein is Elongation factor Tu of Streptococcus agalactiae serotype Ia (strain ATCC 27591 / A909 / CDC SS700).